A 314-amino-acid polypeptide reads, in one-letter code: Malate dehydrogenase (314 aa).

Residues 11–16 (GSGNIG) and aspartate 35 contribute to the NAD(+) site. Residues arginine 84 and arginine 90 each contribute to the substrate site. NAD(+) contacts are provided by residues asparagine 97 and 120–122 (ITN). Asparagine 122 and arginine 153 together coordinate substrate. Histidine 177 (proton acceptor) is an active-site residue.

Belongs to the LDH/MDH superfamily. MDH type 3 family.

The enzyme catalyses (S)-malate + NAD(+) = oxaloacetate + NADH + H(+). In terms of biological role, catalyzes the reversible oxidation of malate to oxaloacetate. This is Malate dehydrogenase from Rickettsia bellii (strain OSU 85-389).